The primary structure comprises 188 residues: Peptidyl-tRNA hydrolase (188 aa).

Residue tyrosine 14 coordinates tRNA. Histidine 19 serves as the catalytic Proton acceptor. Residues tyrosine 64, asparagine 66, and asparagine 112 each coordinate tRNA.

The protein belongs to the PTH family. In terms of assembly, monomer.

It localises to the cytoplasm. The enzyme catalyses an N-acyl-L-alpha-aminoacyl-tRNA + H2O = an N-acyl-L-amino acid + a tRNA + H(+). In terms of biological role, hydrolyzes ribosome-free peptidyl-tRNAs (with 1 or more amino acids incorporated), which drop off the ribosome during protein synthesis, or as a result of ribosome stalling. Functionally, catalyzes the release of premature peptidyl moieties from peptidyl-tRNA molecules trapped in stalled 50S ribosomal subunits, and thus maintains levels of free tRNAs and 50S ribosomes. The sequence is that of Peptidyl-tRNA hydrolase from Bacillus pumilus (strain SAFR-032).